A 118-amino-acid polypeptide reads, in one-letter code: UPF0342 protein ABC1519 (118 aa).

The protein belongs to the UPF0342 family.

The protein is UPF0342 protein ABC1519 of Shouchella clausii (strain KSM-K16) (Alkalihalobacillus clausii).